A 629-amino-acid chain; its full sequence is Polygalacturonase non-catalytic subunit AroGP2 (629 aa).

The N-terminal stretch at 1–27 (MHNKILVSSYILLVLLFSLSSFNIVVA) is a signal peptide. Residues 28–109 (KDGDESGNPF…MCAPDLLPSL (82 aa)) constitute a propeptide that is removed on maturation. Residues Asn125, Asn143, Asn255, Asn277, Asn333, Asn368, and Asn386 are each glycosylated (N-linked (GlcNAc...) asparagine). Residues 267-293 (YGQNANGENQNFTSYSTNGNNPQNNFK) show a composition bias toward polar residues. The tract at residues 267–305 (YGQNANGENQNFTSYSTNGNNPQNNFKNYGVGGNGPSET) is disordered. One can recognise a BURP domain in the interval 414-628 (FFREKMLKSG…FENDMTWATA (215 aa)).

In terms of assembly, interacts with polygalacturonase to form heterodimers.

It is found in the secreted. The protein localises to the extracellular space. It localises to the apoplast. Its subcellular location is the cell wall. Its function is as follows. Non-catalytic subunit of polygalacturonase. The protein is Polygalacturonase non-catalytic subunit AroGP2 (GP2) of Solanum lycopersicum (Tomato).